A 48-amino-acid polypeptide reads, in one-letter code: Light-harvesting polypeptide B-885 beta-2 chain (48 aa).

At alanine 1–threonine 20 the chain is on the cytoplasmic side. A helical transmembrane segment spans residues leucine 21–tryptophan 43. A bacteriochlorophyll is bound at residue histidine 37. Topologically, residues arginine 44–glutamine 48 are periplasmic.

This sequence belongs to the antenna complex beta subunit family. The core complex is formed by different alpha and beta chains, binding bacteriochlorophyll molecules, and arranged most probably in tetrameric structures disposed around the reaction center. The non-pigmented gamma chains may constitute additional components.

It localises to the cell inner membrane. Antenna complexes are light-harvesting systems, which transfer the excitation energy to the reaction centers. The chain is Light-harvesting polypeptide B-885 beta-2 chain from Rhodocyclus tenuis (Rhodospirillum tenue).